A 373-amino-acid polypeptide reads, in one-letter code: Flagellar P-ring protein (373 aa).

The signal sequence occupies residues 1 to 26 (MKLFFRFVTLVAVLAMSLANVAPAWA).

It belongs to the FlgI family. The basal body constitutes a major portion of the flagellar organelle and consists of four rings (L,P,S, and M) mounted on a central rod.

The protein resides in the periplasm. Its subcellular location is the bacterial flagellum basal body. Assembles around the rod to form the L-ring and probably protects the motor/basal body from shearing forces during rotation. This Rhizobium johnstonii (strain DSM 114642 / LMG 32736 / 3841) (Rhizobium leguminosarum bv. viciae) protein is Flagellar P-ring protein.